Reading from the N-terminus, the 191-residue chain is MRLFYQRISLLISLCGFFSAAWASDVQPASSTGLWQRFTQNVAETWHHSPHQDLYVPAITWHNRFTYDDEHIRRYNERPWGAGYGISRYDEKGNWHAIYLIAFKDSFNKWEPFGGYAWEKQWRPFDRYQDIHFGAGFTAGVTARDNWKYIPVPALLPLASVGYKQLTFQATYIPGTYNNGNVFFAWLRYRF.

Residues 1-23 (MRLFYQRISLLISLCGFFSAAWA) form the signal peptide. Active-site residues include His62, Asp105, and Ser106.

The protein belongs to the lipid A palmitoyltransferase family. Homodimer.

The protein resides in the cell outer membrane. The enzyme catalyses a lipid A + a 1,2-diacyl-sn-glycero-3-phosphocholine = a hepta-acyl lipid A + a 2-acyl-sn-glycero-3-phosphocholine. The catalysed reaction is a lipid IVA + a 1,2-diacyl-sn-glycero-3-phosphocholine = a lipid IVB + a 2-acyl-sn-glycero-3-phosphocholine. It carries out the reaction a lipid IIA + a 1,2-diacyl-sn-glycero-3-phosphocholine = a lipid IIB + a 2-acyl-sn-glycero-3-phosphocholine. Its function is as follows. Transfers a fatty acid residue from the sn-1 position of a phospholipid to the N-linked hydroxyfatty acid chain on the proximal unit of lipid A or its precursors. This chain is Lipid A acyltransferase PagP, found in Sodalis glossinidius (strain morsitans).